The primary structure comprises 447 residues: GTPase Der (447 aa).

2 consecutive EngA-type G domains span residues 2–166 (YRVA…PEYE) and 183–358 (IKVA…NQSW). GTP is bound by residues 8–15 (GRPNVGKS), 55–59 (DTGGY), 118–121 (NKID), 189–196 (GKPNAGKS), 236–240 (DTAGL), and 301–304 (NKID). The 85-residue stretch at 359–443 (KRVGTGQLNR…PIKLLLRGKE (85 aa)) folds into the KH-like domain.

The protein belongs to the TRAFAC class TrmE-Era-EngA-EngB-Septin-like GTPase superfamily. EngA (Der) GTPase family. Associates with the 50S ribosomal subunit.

Its function is as follows. GTPase that plays an essential role in the late steps of ribosome biogenesis. The sequence is that of GTPase Der from Persephonella marina (strain DSM 14350 / EX-H1).